A 347-amino-acid chain; its full sequence is Ferrochelatase (347 aa).

Cys-158 is a binding site for [2Fe-2S] cluster. 2 residues coordinate Fe cation: His-193 and Glu-272. [2Fe-2S] cluster is bound by residues Cys-332, Cys-339, and Cys-341.

The protein belongs to the ferrochelatase family. As to quaternary structure, homodimer. It depends on [2Fe-2S] cluster as a cofactor.

It localises to the cytoplasm. It catalyses the reaction heme b + 2 H(+) = protoporphyrin IX + Fe(2+). It functions in the pathway porphyrin-containing compound metabolism; protoheme biosynthesis; protoheme from protoporphyrin-IX: step 1/1. In terms of biological role, catalyzes the ferrous insertion into protoporphyrin IX. The protein is Ferrochelatase of Caulobacter vibrioides (strain ATCC 19089 / CIP 103742 / CB 15) (Caulobacter crescentus).